A 141-amino-acid polypeptide reads, in one-letter code: Hemoglobin subunit alpha-A (141 aa).

The 141-residue stretch at 1–141 folds into the Globin domain; sequence VLSASDKANV…VGTVLTAKYR (141 aa). His-58 serves as a coordination point for O2. Residue His-87 participates in heme b binding.

Belongs to the globin family. In terms of assembly, heterotetramer of two alpha chains and two beta chains. In terms of tissue distribution, red blood cells.

Functionally, involved in oxygen transport from the lung to the various peripheral tissues. This Sturnus vulgaris (Starling) protein is Hemoglobin subunit alpha-A (HBAA).